The sequence spans 139 residues: Peptide methionine sulfoxide reductase MsrB (139 aa).

Positions 9–131 (TPSDNTELTE…NSASLSFIDD (123 aa)) constitute a MsrB domain. Residues C48, C51, C97, and C100 each contribute to the Zn(2+) site. Catalysis depends on C120, which acts as the Nucleophile.

This sequence belongs to the MsrB Met sulfoxide reductase family. The cofactor is Zn(2+).

It catalyses the reaction L-methionyl-[protein] + [thioredoxin]-disulfide + H2O = L-methionyl-(R)-S-oxide-[protein] + [thioredoxin]-dithiol. This is Peptide methionine sulfoxide reductase MsrB from Pectobacterium carotovorum subsp. carotovorum (strain PC1).